The sequence spans 186 residues: MKINGNEIRPGNVIEHEGGLWVAVKTNAVKPGKGGAYNQVELKNLINGTKLNERFRAAETVERVRLEQKDFSFLYEQGEALIFMDTETYEQLELQKDFVGDRAAFLQDGMMVTVELYEEKPIGIRLPDQVTLAITEADPVVKGQTAASSYKPAVLENGIRILVPPFIASGERVIVDTNELTYISRA.

This sequence belongs to the elongation factor P family.

The protein resides in the cytoplasm. It participates in protein biosynthesis; polypeptide chain elongation. Its function is as follows. Involved in peptide bond synthesis. Stimulates efficient translation and peptide-bond synthesis on native or reconstituted 70S ribosomes in vitro. Probably functions indirectly by altering the affinity of the ribosome for aminoacyl-tRNA, thus increasing their reactivity as acceptors for peptidyl transferase. This is Elongation factor P from Brucella canis (strain ATCC 23365 / NCTC 10854 / RM-666).